The primary structure comprises 309 residues: 4-hydroxy-3-methylbut-2-enyl diphosphate reductase (309 aa).

Cys-12 contacts [4Fe-4S] cluster. His-43 and His-77 together coordinate (2E)-4-hydroxy-3-methylbut-2-enyl diphosphate. Positions 43 and 77 each coordinate dimethylallyl diphosphate. Isopentenyl diphosphate-binding residues include His-43 and His-77. Residue Cys-99 participates in [4Fe-4S] cluster binding. His-127 lines the (2E)-4-hydroxy-3-methylbut-2-enyl diphosphate pocket. Residue His-127 coordinates dimethylallyl diphosphate. His-127 contributes to the isopentenyl diphosphate binding site. The active-site Proton donor is Glu-129. Thr-167 serves as a coordination point for (2E)-4-hydroxy-3-methylbut-2-enyl diphosphate. Cys-197 contributes to the [4Fe-4S] cluster binding site. Residues Ser-225, Ser-226, Asn-227, and Ser-269 each contribute to the (2E)-4-hydroxy-3-methylbut-2-enyl diphosphate site. Residues Ser-225, Ser-226, Asn-227, and Ser-269 each contribute to the dimethylallyl diphosphate site. Residues Ser-225, Ser-226, Asn-227, and Ser-269 each contribute to the isopentenyl diphosphate site.

It belongs to the IspH family. [4Fe-4S] cluster serves as cofactor.

It catalyses the reaction isopentenyl diphosphate + 2 oxidized [2Fe-2S]-[ferredoxin] + H2O = (2E)-4-hydroxy-3-methylbut-2-enyl diphosphate + 2 reduced [2Fe-2S]-[ferredoxin] + 2 H(+). The enzyme catalyses dimethylallyl diphosphate + 2 oxidized [2Fe-2S]-[ferredoxin] + H2O = (2E)-4-hydroxy-3-methylbut-2-enyl diphosphate + 2 reduced [2Fe-2S]-[ferredoxin] + 2 H(+). It participates in isoprenoid biosynthesis; dimethylallyl diphosphate biosynthesis; dimethylallyl diphosphate from (2E)-4-hydroxy-3-methylbutenyl diphosphate: step 1/1. It functions in the pathway isoprenoid biosynthesis; isopentenyl diphosphate biosynthesis via DXP pathway; isopentenyl diphosphate from 1-deoxy-D-xylulose 5-phosphate: step 6/6. In terms of biological role, catalyzes the conversion of 1-hydroxy-2-methyl-2-(E)-butenyl 4-diphosphate (HMBPP) into a mixture of isopentenyl diphosphate (IPP) and dimethylallyl diphosphate (DMAPP). Acts in the terminal step of the DOXP/MEP pathway for isoprenoid precursor biosynthesis. The polypeptide is 4-hydroxy-3-methylbut-2-enyl diphosphate reductase (Wolbachia pipientis wMel).